Here is a 123-residue protein sequence, read N- to C-terminus: UPF0102 protein Fjoh_1217 (123 aa).

This sequence belongs to the UPF0102 family.

The sequence is that of UPF0102 protein Fjoh_1217 from Flavobacterium johnsoniae (strain ATCC 17061 / DSM 2064 / JCM 8514 / BCRC 14874 / CCUG 350202 / NBRC 14942 / NCIMB 11054 / UW101) (Cytophaga johnsonae).